Consider the following 50-residue polypeptide: Mating-type pheromone BAP1(1) (50 aa).

The disordered stretch occupies residues 1–32 (MDGEGHDINIWGARMSPSPAAAPVSATRGAPW). Low complexity predominate over residues 16–26 (SPSPAAAPVSA). A Cysteine methyl ester modification is found at cysteine 47. Cysteine 47 is lipidated: S-farnesyl cysteine. The propeptide at 48–50 (VCH) is removed in mature form.

The protein resides in the cell membrane. Its function is as follows. Activates B-regulated development. In Schizophyllum commune (Split gill fungus), this protein is Mating-type pheromone BAP1(1) (BAP1(1)).